A 309-amino-acid polypeptide reads, in one-letter code: MPIRVPDELPAVSCLRNENVFVMTSSRASIQDIRPLKVLLLNLMPKKIETENQFLRLLSNSPLQIDIQLLRIDSRVPKNTPVEHLDTFYCDFAQIKEQNFDGLIVTGAPLGLVEFEDVAYWEEIKEIITWAKEHVTSTLFICWAAQAGLNILYDLPKYTLKQKISGVYRHTTCDPFALLTRGFDETFFAPHSRYAGFPVEFIQQNTDLEILATSEQAGAYLFASKDKRVVFATGHPEYDPNTLADEYHRDVKAGLAPQLPENYFPDNNPNKKPLVSWRSHGHLLFANWLNYYVYQITPFDLAQMNPTLD.

C142 (acyl-thioester intermediate) is an active-site residue. Substrate-binding residues include K163 and S192. H235 (proton acceptor) is an active-site residue. E237 is a catalytic residue. R249 lines the substrate pocket.

It belongs to the MetA family.

Its subcellular location is the cytoplasm. The enzyme catalyses L-homoserine + succinyl-CoA = O-succinyl-L-homoserine + CoA. It functions in the pathway amino-acid biosynthesis; L-methionine biosynthesis via de novo pathway; O-succinyl-L-homoserine from L-homoserine: step 1/1. Transfers a succinyl group from succinyl-CoA to L-homoserine, forming succinyl-L-homoserine. The polypeptide is Homoserine O-succinyltransferase (Proteus mirabilis (strain HI4320)).